Consider the following 161-residue polypeptide: Phosphopantetheine adenylyltransferase (161 aa).

Ser9 serves as a coordination point for substrate. ATP contacts are provided by residues 9–10 (SF) and His17. The substrate site is built by Lys41, Thr73, and Arg87. ATP contacts are provided by residues 88-90 (GLR), Glu98, and 123-129 (YSFISST).

It belongs to the bacterial CoaD family. As to quaternary structure, homohexamer. It depends on Mg(2+) as a cofactor.

The protein resides in the cytoplasm. The catalysed reaction is (R)-4'-phosphopantetheine + ATP + H(+) = 3'-dephospho-CoA + diphosphate. Its pathway is cofactor biosynthesis; coenzyme A biosynthesis; CoA from (R)-pantothenate: step 4/5. Functionally, reversibly transfers an adenylyl group from ATP to 4'-phosphopantetheine, yielding dephospho-CoA (dPCoA) and pyrophosphate. This is Phosphopantetheine adenylyltransferase from Desulforamulus reducens (strain ATCC BAA-1160 / DSM 100696 / MI-1) (Desulfotomaculum reducens).